Consider the following 415-residue polypeptide: Gamma-glutamyl phosphate reductase (415 aa).

Belongs to the gamma-glutamyl phosphate reductase family.

The protein localises to the cytoplasm. It catalyses the reaction L-glutamate 5-semialdehyde + phosphate + NADP(+) = L-glutamyl 5-phosphate + NADPH + H(+). It functions in the pathway amino-acid biosynthesis; L-proline biosynthesis; L-glutamate 5-semialdehyde from L-glutamate: step 2/2. In terms of biological role, catalyzes the NADPH-dependent reduction of L-glutamate 5-phosphate into L-glutamate 5-semialdehyde and phosphate. The product spontaneously undergoes cyclization to form 1-pyrroline-5-carboxylate. This is Gamma-glutamyl phosphate reductase from Clostridium perfringens (strain ATCC 13124 / DSM 756 / JCM 1290 / NCIMB 6125 / NCTC 8237 / Type A).